The sequence spans 518 residues: GMP synthase [glutamine-hydrolyzing] (518 aa).

In terms of domain architecture, Glutamine amidotransferase type-1 spans 8 to 201 (TVLIIDFGSQ…VHKISGLKGN (194 aa)). Residue cysteine 85 is the Nucleophile of the active site. Residues histidine 175 and glutamate 177 contribute to the active site. A GMPS ATP-PPase domain is found at 202-393 (WSMASYRDQA…LGLPEQFLGR (192 aa)). 229–235 (SGGVDSS) is an ATP binding site.

As to quaternary structure, homodimer.

It catalyses the reaction XMP + L-glutamine + ATP + H2O = GMP + L-glutamate + AMP + diphosphate + 2 H(+). It functions in the pathway purine metabolism; GMP biosynthesis; GMP from XMP (L-Gln route): step 1/1. In terms of biological role, catalyzes the synthesis of GMP from XMP. This chain is GMP synthase [glutamine-hydrolyzing], found in Bartonella quintana (strain Toulouse) (Rochalimaea quintana).